Consider the following 313-residue polypeptide: Glyoxylate/hydroxypyruvate reductase A HPR2 (313 aa).

NADP(+)-binding positions include 152-155, 174-176, 230-232, and Asp-256; these read LGRI, SRT, and IGR. Residue Arg-232 is part of the active site. Residue Glu-261 is part of the active site. His-279 serves as the catalytic Proton donor. An NADP(+)-binding site is contributed by 279 to 281; that stretch reads HVG.

The protein belongs to the D-isomer specific 2-hydroxyacid dehydrogenase family. GyaR subfamily. As to quaternary structure, homodimer.

It localises to the cytoplasm. It catalyses the reaction glycolate + NADP(+) = glyoxylate + NADPH + H(+). The catalysed reaction is (R)-glycerate + NAD(+) = 3-hydroxypyruvate + NADH + H(+). It carries out the reaction (R)-glycerate + NADP(+) = 3-hydroxypyruvate + NADPH + H(+). With respect to regulation, strongly inhibited by oxalate. Its function is as follows. Catalyzes the NADPH-dependent reduction of glyoxylate and hydroxypyruvate (HP) into glycolate and glycerate in the cytoplasm, thus providing a cytosolic bypass to the photorespiratory core cycle. Mostly active in the presence of NADPH and hydroxypyruvate. This is Glyoxylate/hydroxypyruvate reductase A HPR2 (HPR2) from Arabidopsis thaliana (Mouse-ear cress).